We begin with the raw amino-acid sequence, 292 residues long: Ribosomal RNA small subunit methyltransferase A (292 aa).

S-adenosyl-L-methionine contacts are provided by N28, L30, G55, E77, D103, and N123.

This sequence belongs to the class I-like SAM-binding methyltransferase superfamily. rRNA adenine N(6)-methyltransferase family. RsmA subfamily.

The protein localises to the cytoplasm. The catalysed reaction is adenosine(1518)/adenosine(1519) in 16S rRNA + 4 S-adenosyl-L-methionine = N(6)-dimethyladenosine(1518)/N(6)-dimethyladenosine(1519) in 16S rRNA + 4 S-adenosyl-L-homocysteine + 4 H(+). Functionally, specifically dimethylates two adjacent adenosines (A1518 and A1519) in the loop of a conserved hairpin near the 3'-end of 16S rRNA in the 30S particle. May play a critical role in biogenesis of 30S subunits. The sequence is that of Ribosomal RNA small subunit methyltransferase A from Methylobacterium radiotolerans (strain ATCC 27329 / DSM 1819 / JCM 2831 / NBRC 15690 / NCIMB 10815 / 0-1).